A 136-amino-acid chain; its full sequence is Beta-hordothionin (136 aa).

Residues Met1–Gly27 form the signal peptide. Disulfide bonds link Cys30/Cys66, Cys31/Cys58, Cys39/Cys56, and Cys43/Cys52. The propeptide at Leu73–Ala136 is acidic domain.

Belongs to the plant thionin (TC 1.C.44) family. 4 C-C subfamily. As to quaternary structure, homodimer.

It localises to the secreted. Thionins are small plant proteins which are toxic to animal cells. They seem to exert their toxic effect at the level of the cell membrane. Their precise function is not known. This is Beta-hordothionin (THI1.2) from Hordeum vulgare (Barley).